Consider the following 286-residue polypeptide: Plasma membrane ascorbate-dependent reductase CYBRD1 (286 aa).

Over 1–7 the chain is Cytoplasmic; it reads MAMEGYW. Residues 8-32 traverse the membrane as a helical segment; sequence RFLALLGSALLVGFLSVIFALVWVL. In terms of domain architecture, Cytochrome b561 spans 15 to 220; it reads SALLVGFLSV…FGALIFWIVT (206 aa). Over 33–47 the chain is Extracellular; sequence HYREGLGWDGSALEF. The helical transmembrane segment at 48–69 threads the bilayer; the sequence is NWHPVLMVTGFVFIQGIAIIVY. Residues His50, Arg70, and Lys79 each coordinate heme b. The Cytoplasmic portion of the chain corresponds to 70 to 78; that stretch reads RLPWTWKCS. Residues Lys79 and Lys83 each coordinate L-ascorbate. Residues 79–105 traverse the membrane as a helical segment; it reads KLLMKSIHAGLNAVAAILAIISVVAVF. His86 is a binding site for heme b. Topologically, residues 106-118 are extracellular; the sequence is ENHNVNNIANMYS. His108 contacts Fe(3+). Heme b is bound by residues 115-118 and His120; that span reads NMYS. Residues 119–144 form a helical membrane-spanning segment; it reads LHSWVGLIAVICYLLQLLSGFSVFLL. The Cytoplasmic segment spans residues 145–151; that stretch reads PWAPLSL. Arg152 is a binding site for L-ascorbate. The chain crosses the membrane as a helical span at residues 152 to 179; sequence RAFLMPIHVYSGIVIFGTVIATALMGLT. Heme b contacts are provided by His159 and Glu180. Topologically, residues 180–197 are extracellular; it reads EKLIFSLRDPAYSTFPPE. A helical transmembrane segment spans residues 198-222; it reads GVFVNTLGLLILVFGALIFWIVTRP. Topologically, residues 223-286 are cytoplasmic; that stretch reads QWKRPKEPNS…LDEAGQRSTM (64 aa). Lys225 contributes to the heme b binding site. The segment at 229-268 is disordered; sequence EPNSTILHPNGGTEQGARGSMPAYSGNNMDKSDSELNSEV. Residue Ser232 is modified to Phosphoserine. Thr285 is subject to Phosphothreonine.

In terms of assembly, homodimer. It depends on heme b as a cofactor. Present in erythrocyte membranes (at protein level). Also expressed in respiratory epithelium.

Its subcellular location is the cell membrane. The protein localises to the apical cell membrane. It catalyses the reaction Fe(3+)(out) + L-ascorbate(in) = monodehydro-L-ascorbate radical(in) + Fe(2+)(out) + H(+). The catalysed reaction is Cu(2+)(out) + L-ascorbate(in) = Cu(+)(out) + monodehydro-L-ascorbate radical(in) + H(+). It carries out the reaction monodehydro-L-ascorbate radical(out) + L-ascorbate(in) = monodehydro-L-ascorbate radical(in) + L-ascorbate(out). Activated by chelators like citrate, malate, and oxalate specially at alkaline pH. Plasma membrane reductase that uses cytoplasmic ascorbate as an electron donor to reduce extracellular Fe(3+) into Fe(2+). Probably functions in dietary iron absorption at the brush border of duodenal enterocytes by producing Fe(2+), the divalent form of iron that can be transported into enterocytes. It is also able to reduce extracellular monodehydro-L-ascorbate and may be involved in extracellular ascorbate regeneration by erythrocytes in blood. May also act as a ferrireductase in airway epithelial cells. May also function as a cupric transmembrane reductase. In Homo sapiens (Human), this protein is Plasma membrane ascorbate-dependent reductase CYBRD1.